The sequence spans 202 residues: Small ribosomal subunit protein uS4 (202 aa).

An S4 RNA-binding domain is found at 94–157 (SRLDNLVYRM…KDLPIVAAGA (64 aa)).

The protein belongs to the universal ribosomal protein uS4 family. In terms of assembly, part of the 30S ribosomal subunit. Contacts protein S5. The interaction surface between S4 and S5 is involved in control of translational fidelity.

One of the primary rRNA binding proteins, it binds directly to 16S rRNA where it nucleates assembly of the body of the 30S subunit. Its function is as follows. With S5 and S12 plays an important role in translational accuracy. This Malacoplasma penetrans (strain HF-2) (Mycoplasma penetrans) protein is Small ribosomal subunit protein uS4.